The primary structure comprises 513 residues: MTRVINLDGESLTLEDVIAIARQGVACRIDDSAVEAVNASRKIVDDIVSEKRVVYGVTTGFGSLCNVSISPEDTVQLQENLIRTHASGFGDPLPEDAVRAIMLIRINSLVKGYSGIRLSTIEKLLELLNKGVHPYIPEKGSLGASGDLAPLAHMVLPMLGLGKAYYKGELLSGQEALDKAGIDKISLAAKEGLALINGTTVLTAIGALATYDAIQLLKLSDLAGALSLEVHNGITSPFEENLHTIRPQSGQLATARNIRNLLEGSQNTTVATQSRVQDPYTLRCMPQIHGASKDSIAYVKSKVDIEINSVTDNPIICKDGHVISGGNFHGEPMAQPFDFLGIAISEIGNVSERRVERLVNSQLSKLPSFLVKYPGLNSGFMITQYACASLASENKVLAHPASVDSIPSCENQEDFVSMGTTAARKAFEILKNSRRIVATEIMAACQALDLKSENHELGKGTKVAYDLFRKEVNFIEHDKHIEIYDELNKASTVIEDPSFLEAVEQAVELSIQF.

The segment at residues 144-146 (ASG) is a cross-link (5-imidazolinone (Ala-Gly)). The residue at position 145 (serine 145) is a 2,3-didehydroalanine (Ser).

It belongs to the PAL/histidase family. Contains an active site 4-methylidene-imidazol-5-one (MIO), which is formed autocatalytically by cyclization and dehydration of residues Ala-Ser-Gly.

It is found in the cytoplasm. The catalysed reaction is L-histidine = trans-urocanate + NH4(+). It participates in amino-acid degradation; L-histidine degradation into L-glutamate; N-formimidoyl-L-glutamate from L-histidine: step 1/3. This chain is Histidine ammonia-lyase, found in Streptococcus pyogenes serotype M49 (strain NZ131).